The sequence spans 1153 residues: Stress response protein nst1 (1153 aa).

Disordered regions lie at residues 1 to 212, 288 to 364, 421 to 467, and 507 to 941; these read MVPA…TSTQ, QGSF…DEET, ESLH…EQRM, and MEEE…TQRD. Residues 11–30 are compositionally biased toward low complexity; that stretch reads SSSTMPNSSSTTAHSAPTTN. The segment covering 53–63 has biased composition (basic residues); sequence NRKKQKRRQKQ. Low complexity predominate over residues 64–73; it reads AARLAERQLA. Positions 76 to 90 are enriched in polar residues; it reads HVSTDDATQNGSSHT. Composition is skewed to basic and acidic residues over residues 91–109 and 116–128; these read NPERHHSDDGGADGPDHEQ and YPKDGQDSTEAHI. A compositionally biased stretch (polar residues) spans 129 to 140; it reads DSQNPQGPNGTE. Residues 146–160 show a composition bias toward basic residues; it reads TGRKSKKKKGKKGRN. Residues 169 to 182 show a composition bias toward low complexity; the sequence is TSTPMSTPSVSMSH. Residues 312-321 are compositionally biased toward polar residues; that stretch reads GQHTRTQGQF. Composition is skewed to acidic residues over residues 332 to 363 and 433 to 462; these read TEDDDLEENYDEEEDDGDEPYSDEELDEEDEE and DDEDYDDEEDEDYDSQEEEDYEEDEMDAMT. A coiled-coil region spans residues 447-658; that stretch reads SQEEEDYEED…EQQAKKDTAK (212 aa). Basic and acidic residues-rich tracts occupy residues 507 to 526 and 536 to 674; these read MEEETRNEQRNAKKAREAQK and QAKE…DQAK. Low complexity predominate over residues 721–739; it reads RQPSQQDSHSSSPHSQAPS. Residues 740–769 are compositionally biased toward polar residues; that stretch reads TDPSQASLSPRSMPVSQSSGVASGNSQQGQ. The segment covering 913 to 925 has biased composition (low complexity); it reads PISRPSPIKRPSS. Basic and acidic residues predominate over residues 931-941; sequence QKGDDRTTQRD.

This sequence belongs to the NST1 family.

It is found in the cytoplasm. May act as a negative regulator of salt tolerance. This Aspergillus fumigatus (strain ATCC MYA-4609 / CBS 101355 / FGSC A1100 / Af293) (Neosartorya fumigata) protein is Stress response protein nst1 (nst1).